Here is a 433-residue protein sequence, read N- to C-terminus: GPI mannosyltransferase 2 (433 aa).

Met1 is a topological domain (cytoplasmic). A helical transmembrane segment spans residues 2–22 (IVGLTLYFVLFRSIQYLLVFL). Residues 23–109 (TPIRQFDTST…NNDSIYHALR (87 aa)) lie on the Lumenal side of the membrane. Residues Asn69 and Asn101 are each glycosylated (N-linked (GlcNAc...) asparagine). Residues 110-130 (VGVAIENVLFYLSGIVLYFLT) traverse the membrane as a helical segment. The Cytoplasmic segment spans residues 131 to 161 (KKIFSQNIRQSQFARTIAKKTSLLFFLTSAA). The chain crosses the membrane as a helical span at residues 162 to 182 (GFLTSIYSEPLSFFFAFVGIW). At 183-215 (SRECSISVPVLGQFDISWRYWFPYSFISMACFT) the chain is on the lumenal side. Residues 216–236 (LASLNRSNCVLLGIYFIFDLI) form a helical membrane-spanning segment. Residues 237-243 (ELTKNRK) are Cytoplasmic-facing. A helical membrane pass occupies residues 244 to 264 (FVKAICFPLLSGSLMFSALLY). Residues 265-318 (QQYYLPYKTFCPQRGEWCKSQLFSSIFITKTSLYSYIQSHYWGVGLLKYWTPNN) are Lumenal-facing. A helical membrane pass occupies residues 319 to 339 (IPNFLFAVPNIIILIYSSIYF). Over 340 to 350 (SKIYPSYNLKA) the chain is Cytoplasmic. The chain crosses the membrane as a helical span at residues 351-371 (LVWITRALVVIVCFFAHVQIL). Residues 372 to 409 (NRIASFLPLHLWYLADRLVKTSDPKKMENPKGDDKIVK) lie on the Lumenal side of the membrane. Residues 410–430 (FYIYWLAFWIPLQTILFAAFL) traverse the membrane as a helical segment. Residues 431–433 (PPA) are Cytoplasmic-facing.

Belongs to the PIGV family. Part of the GPI mannosyltransferase 2 complex composed of GPI18 and PGA1.

The protein resides in the endoplasmic reticulum membrane. Its pathway is glycolipid biosynthesis; glycosylphosphatidylinositol-anchor biosynthesis. Functionally, mannosyltransferase involved in glycosylphosphatidylinositol-anchor biosynthesis. Responsible for the transfer of the second mannose to the glycosylphosphatidylinositol during GPI precursor assembly. This Saccharomyces cerevisiae (strain ATCC 204508 / S288c) (Baker's yeast) protein is GPI mannosyltransferase 2 (GPI18).